We begin with the raw amino-acid sequence, 321 residues long: MSKPIQIERGVKYRDADKMALIPVRTVVTERQELLRKPEWMKIKLPADSSRIQGIKAAMRKNGLHSVCEEASCPNLAECFNHGTATFMILGAICTRRCPFCDVAHGRPLTPDANEPEKLAQTIHDMGLRYVVITSVDRDDLRDGGAQHFADCISAIRRKNPHIRIETLVPDFRGRMDRALEILTATPPDVFNHNLENVPRVYRQVRPGANYEWSLKLLENFKNAHPDITTKSGLMVGLGETNAEIVEVMRDLRRHGVTMLTLGQYLQPSRHHLPVQRYVSPDEFDEMKAEAMAMGFTHAACGPFVRSSYHADLQAKGIEVK.

The [4Fe-4S] cluster site is built by Cys68, Cys73, Cys79, Cys94, Cys98, Cys101, and Ser308. One can recognise a Radical SAM core domain in the interval 80–297 (FNHGTATFMI…KAEAMAMGFT (218 aa)).

It belongs to the radical SAM superfamily. Lipoyl synthase family. Requires [4Fe-4S] cluster as cofactor.

It is found in the cytoplasm. The catalysed reaction is [[Fe-S] cluster scaffold protein carrying a second [4Fe-4S](2+) cluster] + N(6)-octanoyl-L-lysyl-[protein] + 2 oxidized [2Fe-2S]-[ferredoxin] + 2 S-adenosyl-L-methionine + 4 H(+) = [[Fe-S] cluster scaffold protein] + N(6)-[(R)-dihydrolipoyl]-L-lysyl-[protein] + 4 Fe(3+) + 2 hydrogen sulfide + 2 5'-deoxyadenosine + 2 L-methionine + 2 reduced [2Fe-2S]-[ferredoxin]. Its pathway is protein modification; protein lipoylation via endogenous pathway; protein N(6)-(lipoyl)lysine from octanoyl-[acyl-carrier-protein]: step 2/2. Its function is as follows. Catalyzes the radical-mediated insertion of two sulfur atoms into the C-6 and C-8 positions of the octanoyl moiety bound to the lipoyl domains of lipoate-dependent enzymes, thereby converting the octanoylated domains into lipoylated derivatives. This is Lipoyl synthase from Pectobacterium atrosepticum (strain SCRI 1043 / ATCC BAA-672) (Erwinia carotovora subsp. atroseptica).